Reading from the N-terminus, the 266-residue chain is Glutathione S-transferase AN1595 (266 aa).

A GST N-terminal domain is found at 43–123; it reads SFGKLYTYKR…HVTNEDSTTT (81 aa). Residues K93, E107, C108, and N143 each coordinate glutathione. A substrate-binding site is contributed by K93. One can recognise a GST C-terminal domain in the interval 128–259; sequence SSLDFVQIIR…VEEGLPNAPP (132 aa).

It belongs to the GST superfamily.

Its pathway is secondary metabolite biosynthesis; terpenoid biosynthesis. Functionally, glutathione S-transferase; part of the gene cluster that mediates the biosynthesis of the diterpene ent-pimara-8(14),15-diene (PD). Within the cluster, the HMG-CoA reductase AN1593 functions in the mevalonate pathway, which produces isoprenoid precursors. The geranylgeranyl pyrophosphate (GGPP) synthase AN1592 is needed in the formation of GGPP, the precursor for diterpenes. Lastly, the pimaradiene synthase pbcA performs the 2 cyclization steps that convert GGPP to ent-pimara-8(14),15-diene. The putative roles of the remaining cluster enzymes in ent-pimara-8(14),15-diene biosynthesis is unclear. The cytochrome P450 monooxygenase AN1598, the glutathione S-transferase AN1595, the oxidoreductases AN1596 and AN1597 probably function as decorative enzymes. It is possible that in biological conditions the compound is oxidized to ent-pimara-8(14),15-dien-19-oic acid, which is a bioactive diterpene compound predominant in many plant extracts. The chain is Glutathione S-transferase AN1595 from Emericella nidulans (strain FGSC A4 / ATCC 38163 / CBS 112.46 / NRRL 194 / M139) (Aspergillus nidulans).